A 311-amino-acid polypeptide reads, in one-letter code: GTPase Era (311 aa).

The Era-type G domain maps to 18–185 (RSGFVALIGA…AKYLAESVPN (168 aa)). Residues 26–33 (GAPNAGKS) form a G1 region. 26 to 33 (GAPNAGKS) provides a ligand contact to GTP. A G2 region spans residues 52-56 (QTTRA). The G3 stretch occupies residues 73-76 (DTPG). GTP contacts are provided by residues 73–77 (DTPGI) and 135–138 (NKVD). A G4 region spans residues 135–138 (NKVD). The tract at residues 164-166 (ISA) is G5. Positions 216-293 (LHEELPYAST…HLFLFVKVRE (78 aa)) constitute a KH type-2 domain.

Belongs to the TRAFAC class TrmE-Era-EngA-EngB-Septin-like GTPase superfamily. Era GTPase family. In terms of assembly, monomer.

The protein resides in the cytoplasm. The protein localises to the cell inner membrane. Functionally, an essential GTPase that binds both GDP and GTP, with rapid nucleotide exchange. Plays a role in 16S rRNA processing and 30S ribosomal subunit biogenesis and possibly also in cell cycle regulation and energy metabolism. The polypeptide is GTPase Era (Brucella suis biovar 1 (strain 1330)).